The sequence spans 411 residues: Putative BMP-2-inducible kinase-like protein (411 aa).

3 disordered regions span residues 1–87 (MIAP…TQDI), 215–280 (SQQQ…RVSQ), and 392–411 (QQSQ…PSKQ). 2 stretches are compositionally biased toward basic and acidic residues: residues 8 to 18 (SSEEEGQKDEE) and 53 to 68 (EKRS…KAKY). Positions 47 to 71 (EDEEEEEKRSSDSDYEQAKAKYSDM) form a coiled coil. Composition is skewed to basic residues over residues 220 to 234 (VKQR…RQRR) and 243 to 258 (NGKR…KKTL).

This Homo sapiens (Human) protein is Putative BMP-2-inducible kinase-like protein (BMP2KL).